The chain runs to 426 residues: UPF0761 membrane protein Nmul_A0452 (426 aa).

The next 6 membrane-spanning stretches (helical) occupy residues 48–68 (LLSL…FPAF), 106–126 (LTAI…LTID), 145–165 (LLIY…SLSL), 187–207 (LLRL…YLIV), 217–237 (AIAG…GFAF), and 255–275 (IPIF…GAVI).

This sequence belongs to the UPF0761 family.

The protein resides in the cell inner membrane. The protein is UPF0761 membrane protein Nmul_A0452 of Nitrosospira multiformis (strain ATCC 25196 / NCIMB 11849 / C 71).